Here is a 313-residue protein sequence, read N- to C-terminus: Ribosomal RNA small subunit methyltransferase H (313 aa).

S-adenosyl-L-methionine-binding positions include 35 to 37, aspartate 55, phenylalanine 81, aspartate 103, and glutamine 110; that span reads GGH.

Belongs to the methyltransferase superfamily. RsmH family.

The protein localises to the cytoplasm. The catalysed reaction is cytidine(1402) in 16S rRNA + S-adenosyl-L-methionine = N(4)-methylcytidine(1402) in 16S rRNA + S-adenosyl-L-homocysteine + H(+). Specifically methylates the N4 position of cytidine in position 1402 (C1402) of 16S rRNA. The polypeptide is Ribosomal RNA small subunit methyltransferase H (Pseudomonas aeruginosa (strain LESB58)).